We begin with the raw amino-acid sequence, 278 residues long: Elongation factor Ts (278 aa).

Positions 82–85 (TDFV) are involved in Mg(2+) ion dislocation from EF-Tu.

The protein belongs to the EF-Ts family.

Its subcellular location is the cytoplasm. In terms of biological role, associates with the EF-Tu.GDP complex and induces the exchange of GDP to GTP. It remains bound to the aminoacyl-tRNA.EF-Tu.GTP complex up to the GTP hydrolysis stage on the ribosome. This Streptomyces griseus subsp. griseus (strain JCM 4626 / CBS 651.72 / NBRC 13350 / KCC S-0626 / ISP 5235) protein is Elongation factor Ts.